A 164-amino-acid polypeptide reads, in one-letter code: MAIRPILPYPHAGLSGICAPVTVFDDHLRELVTDLIDTMRAAPGVGITAAHIGVLQRVFVLELTPGTILTYINPEITSHSPQTMRHVEGSVSMPGFTDEVERPSTVEVRFQDITGAEQTETAEGFHAICIQHEIDQLDGIFWLKRLSRLKRDRLVKKWEKSRNP.

Glu133 is a catalytic residue.

This sequence belongs to the polypeptide deformylase family.

The chain is Peptide deformylase-like from Agrobacterium fabrum (strain C58 / ATCC 33970) (Agrobacterium tumefaciens (strain C58)).